Reading from the N-terminus, the 223-residue chain is Trk system potassium uptake protein TrkA (223 aa).

An RCK N-terminal domain is found at 1–118 (MHIVIMGCGR…QRLGIPTVAT (118 aa)). NAD(+) contacts are provided by residues 7 to 11 (GCGRV), D30, 73 to 74 (SS), and R98. In terms of domain architecture, RCK C-terminal spans 133–215 (SGAEPLWRDP…VHKVEAAFAK (83 aa)).

Its function is as follows. Part of a potassium transport system. The sequence is that of Trk system potassium uptake protein TrkA (trkA) from Streptomyces coelicolor (strain ATCC BAA-471 / A3(2) / M145).